A 294-amino-acid chain; its full sequence is Release factor glutamine methyltransferase (294 aa).

Glu148 and Asn201 together coordinate S-adenosyl-L-methionine. 201 to 204 (NPPY) contacts substrate.

This sequence belongs to the protein N5-glutamine methyltransferase family. PrmC subfamily.

The enzyme catalyses L-glutaminyl-[peptide chain release factor] + S-adenosyl-L-methionine = N(5)-methyl-L-glutaminyl-[peptide chain release factor] + S-adenosyl-L-homocysteine + H(+). Its function is as follows. Methylates the class 1 translation termination release factors RF1/PrfA and RF2/PrfB on the glutamine residue of the universally conserved GGQ motif. The chain is Release factor glutamine methyltransferase from Bifidobacterium longum (strain NCC 2705).